Consider the following 189-residue polypeptide: Stathmin-4 (189 aa).

2 S-palmitoyl cysteine lipidation sites follow: Cys-20 and Cys-22. Residues 48 to 189 form the SLD domain; the sequence is SDMEVIELNK…NKELKEEASR (142 aa). Phosphoserine is present on Ser-90. The stretch at 90–188 forms a coiled coil; that stretch reads SLEEIQKKLE…KNKELKEEAS (99 aa). The interval 168–189 is disordered; sequence QEKDKHAEEVRKNKELKEEASR.

Belongs to the stathmin family.

The protein resides in the golgi apparatus. It localises to the cell projection. It is found in the growth cone. The protein localises to the axon. Functionally, exhibits microtubule-destabilizing activity. In Homo sapiens (Human), this protein is Stathmin-4 (STMN4).